A 385-amino-acid chain; its full sequence is cAMP-dependent protein kinase regulatory subunit (385 aa).

Over residues 1–22 (MSSTGFTSPFGNANPFGSSGRS) the composition is skewed to polar residues. Disordered regions lie at residues 1–51 (MSST…GVKN) and 77–111 (DFPA…PVHP). The dimerization and phosphorylation stretch occupies residues 1 to 128 (MSSTGFTSPF…RLKKAISGNF (128 aa)). At serine 89 the chain carries Phosphoserine. 3',5'-cyclic AMP-binding positions include 129-260 (LFNH…EEVP), glutamate 207, arginine 216, 261-378 (ILKT…EAEE), glutamate 328, and arginine 337.

The protein belongs to the cAMP-dependent kinase regulatory chain family. In terms of assembly, tetramer, composed of 2 regulatory (R) and 2 catalytic (C) subunits. In the presence of cAMP it dissociates into 2 active monomeric C subunits and an R dimer.

This is cAMP-dependent protein kinase regulatory subunit (mcb) from Neurospora crassa (strain ATCC 24698 / 74-OR23-1A / CBS 708.71 / DSM 1257 / FGSC 987).